A 481-amino-acid chain; its full sequence is Serine/threonine-protein kinase US3 (481 aa).

Residues 12-63 (GQGRRKEEAVPPETKPSRVFPHGPFYTPAEDACLDSPPPETPKPSHTTPPSE) are disordered. In terms of domain architecture, Protein kinase spans 191–478 (FTIHGALTPG…AAELLCLPLF (288 aa)). ATP-binding positions include 197 to 205 (LTPGSEGCV) and Lys-220. Asp-305 serves as the catalytic Proton acceptor.

It belongs to the protein kinase superfamily. Ser/Thr protein kinase family. As to quaternary structure, interacts with host LAT; this interaction prevents LAT activation of TRAF6. In terms of processing, phosphorylated by UL13; this phosphorylation regulates subsequent phosphorylation of UL31 and UL34 by US3. Autophosphorylated.

Its subcellular location is the host cytoplasm. The protein resides in the host nucleus. The enzyme catalyses L-seryl-[protein] + ATP = O-phospho-L-seryl-[protein] + ADP + H(+). It catalyses the reaction L-threonyl-[protein] + ATP = O-phospho-L-threonyl-[protein] + ADP + H(+). Functionally, multifunctional serine/threonine kinase that plays a role in several processes including egress of virus particles from the nucleus, modulation of the actin cytoskeleton and inhibition of host immune response. Phosphorylates UL31 and UL34, two critical regulators of capsid budding from nucleus to endoplasmic reticulum, thereby facilitating virion egress. Modulates and redistributes host components of the nuclear envelope, including LMNA, emerin/EMD and the nuclear matrix protein MATR3. In turn, facilitates nuclear pore impairment and capsid release through impaired nuclear envelope. Phosphorylates envelope glycoprotein B (gB), probably to direct it to the cell surface. Promotes virus intracellular spread by restructuring host cell cytoskeleton. Blocks host apoptosis to extend cell survival and allow efficient viral replication. Promotes viral gene expression by phosphorylating host HDAC2 to reduce viral genome silencing. Strongly inhibits TCR-activated signal transduction in T-cells by reducing the ubiquitination of LAT and TRAF6, leading to a suboptimal activation of LAT. Subverts host antiviral innate immunity by inhibiting type I interferon production through hyperphosphorylation of beta-catenin/CTNNB1. In addition, phosphorylates the RNA sensor RIGI and the transcription factor IRF3 to prevent the RLR-mediated antiviral signaling pathway. Hyperphosphorylates host RELA and thereby dampens NF-kappa-B signaling. Acts as an immunoevasin partly responsible for inhibition of MR1 expression and antigen presentation in response to bacterial infection. The chain is Serine/threonine-protein kinase US3 (US3) from Human herpesvirus 1 (strain 17) (HHV-1).